We begin with the raw amino-acid sequence, 690 residues long: Elongation factor G (690 aa).

Residues 8–283 (EDYRNFGIMA…AVVDFLPSPL (276 aa)) form the tr-type G domain. GTP is bound by residues 17–24 (AHIDAGKT), 81–85 (DTPGH), and 135–138 (NKMD).

It belongs to the TRAFAC class translation factor GTPase superfamily. Classic translation factor GTPase family. EF-G/EF-2 subfamily.

The protein localises to the cytoplasm. In terms of biological role, catalyzes the GTP-dependent ribosomal translocation step during translation elongation. During this step, the ribosome changes from the pre-translocational (PRE) to the post-translocational (POST) state as the newly formed A-site-bound peptidyl-tRNA and P-site-bound deacylated tRNA move to the P and E sites, respectively. Catalyzes the coordinated movement of the two tRNA molecules, the mRNA and conformational changes in the ribosome. This chain is Elongation factor G, found in Nitrobacter hamburgensis (strain DSM 10229 / NCIMB 13809 / X14).